The primary structure comprises 1434 residues: Probable deoxyribonuclease RhsA (1434 aa).

The tract at residues 14-42 (AMHAGNRPNPPDDRPQPCRGKPPTSPGKT) is disordered. The next 2 membrane-spanning stretches (helical) occupy residues 48–68 (FLGA…VAAA) and 70–90 (VFLV…LAVF). YD repeat units follow at residues 486–521 (YDAA…CADG), 592–628 (DDTG…LGRE), and 847–876 (YDAR…LTEV).

The protein belongs to the RHS/WapA nuclease family.

It is found in the membrane. In terms of biological role, toxic component of a toxin-immunity protein module, which functions as a cellular contact-dependent growth inhibition (CDI) system. This protein may be a nuclease that is specifically inhibited by its cognate immunity protein RhsAI. Upon expression of the C-terminus (residues 1284-1434) in E.coli growth is inhibited, cells elongate, nucleoids condense and plasmid DNA is degraded; these effects are blocked specifically by cognate immunity protein RshIA. Cell contact is necessary for growth inhibition. The sequence is that of Probable deoxyribonuclease RhsA (rhsA) from Dickeya dadantii (strain 3937) (Erwinia chrysanthemi (strain 3937)).